The sequence spans 259 residues: Type III pantothenate kinase (259 aa).

6-13 provides a ligand contact to ATP; that stretch reads DAGNTNIV. Substrate contacts are provided by residues Y100 and 107-110; that span reads GADR. The active-site Proton acceptor is D109. K(+) is bound at residue D129. Residue T132 coordinates ATP. T184 lines the substrate pocket.

It belongs to the type III pantothenate kinase family. Homodimer. Requires NH4(+) as cofactor. K(+) is required as a cofactor.

It localises to the cytoplasm. The catalysed reaction is (R)-pantothenate + ATP = (R)-4'-phosphopantothenate + ADP + H(+). Its pathway is cofactor biosynthesis; coenzyme A biosynthesis; CoA from (R)-pantothenate: step 1/5. Its function is as follows. Catalyzes the phosphorylation of pantothenate (Pan), the first step in CoA biosynthesis. In Clostridium novyi (strain NT), this protein is Type III pantothenate kinase.